A 270-amino-acid polypeptide reads, in one-letter code: NAD kinase (270 aa).

Aspartate 45 serves as the catalytic Proton acceptor. NAD(+)-binding positions include 45–46 (DG), 121–122 (NE), lysine 147, aspartate 149, 160–165 (TAYSKS), and alanine 184.

This sequence belongs to the NAD kinase family. The cofactor is a divalent metal cation.

The protein resides in the cytoplasm. The enzyme catalyses NAD(+) + ATP = ADP + NADP(+) + H(+). Its function is as follows. Involved in the regulation of the intracellular balance of NAD and NADP, and is a key enzyme in the biosynthesis of NADP. Catalyzes specifically the phosphorylation on 2'-hydroxyl of the adenosine moiety of NAD to yield NADP. The polypeptide is NAD kinase (Lactobacillus johnsonii (strain CNCM I-12250 / La1 / NCC 533)).